A 349-amino-acid chain; its full sequence is Dihydroorotate dehydrogenase (quinone) (349 aa).

FMN contacts are provided by residues Ala65–Lys69 and Ala89. Lys69 is a substrate binding site. Asn114–Phe118 is a binding site for substrate. Residues Asn143 and Asn176 each coordinate FMN. Substrate is bound at residue Asn176. Residue Ser179 is the Nucleophile of the active site. Residue Asn181 coordinates substrate. Residues Lys212 and Thr240 each coordinate FMN. Asn241–Thr242 is a substrate binding site. The disordered stretch occupies residues Thr244 to Pro265. Over residues Glu245–Ala255 the composition is skewed to basic and acidic residues. Residues Gly263, Gly290, and Tyr311–Thr312 each bind FMN.

The protein belongs to the dihydroorotate dehydrogenase family. Type 2 subfamily. In terms of assembly, monomer. FMN is required as a cofactor.

It localises to the cell membrane. The catalysed reaction is (S)-dihydroorotate + a quinone = orotate + a quinol. The protein operates within pyrimidine metabolism; UMP biosynthesis via de novo pathway; orotate from (S)-dihydroorotate (quinone route): step 1/1. In terms of biological role, catalyzes the conversion of dihydroorotate to orotate with quinone as electron acceptor. The chain is Dihydroorotate dehydrogenase (quinone) from Halobacterium salinarum (strain ATCC 29341 / DSM 671 / R1).